The sequence spans 116 residues: U11-theraphotoxin-Hhn1b (116 aa).

Positions 1 to 21 are cleaved as a signal peptide; the sequence is MNTVRVTFLLVFVLAVSLGQA. The propeptide occupies 22–74; sequence DKDENRMEMQEKTEQGKSYLDFAENLLLQKLEELEAKLLEEDSEESRNSRQKR. Residues 60-69 show a composition bias toward basic and acidic residues; it reads LEEDSEESRN. The tract at residues 60-83 is disordered; that stretch reads LEEDSEESRNSRQKRCIGEGVPCD. 3 disulfides stabilise this stretch: Cys75–Cys90, Cys82–Cys95, and Cys89–Cys110.

Belongs to the neurotoxin 14 (magi-1) family. 01 (HNTX-16) subfamily. In terms of tissue distribution, expressed by the venom gland.

It is found in the secreted. Functionally, probable ion channel inhibitor. This Cyriopagopus hainanus (Chinese bird spider) protein is U11-theraphotoxin-Hhn1b.